The primary structure comprises 37 residues: Bactericidin B-2 (37 aa).

Glycine 37 carries the glycine amide modification.

It belongs to the cecropin family.

Its subcellular location is the secreted. Its function is as follows. Cecropins have lytic and antibacterial activity against several Gram-positive and Gram-negative bacteria. The sequence is that of Bactericidin B-2 from Manduca sexta (Tobacco hawkmoth).